The sequence spans 434 residues: Homogentisate 1,2-dioxygenase (434 aa).

Residue His-289 is the Proton acceptor of the active site. His-332 and Glu-338 together coordinate Fe cation. Positions 347 and 368 each coordinate homogentisate. His-368 is a binding site for Fe cation.

This sequence belongs to the homogentisate dioxygenase family. As to quaternary structure, hexamer; dimer of trimers. Fe cation serves as cofactor.

It catalyses the reaction homogentisate + O2 = 4-maleylacetoacetate + H(+). Its pathway is amino-acid degradation; L-phenylalanine degradation; acetoacetate and fumarate from L-phenylalanine: step 4/6. Involved in the catabolism of homogentisate (2,5-dihydroxyphenylacetate or 2,5-OH-PhAc), a central intermediate in the degradation of phenylalanine and tyrosine. Catalyzes the oxidative ring cleavage of the aromatic ring of homogentisate to yield maleylacetoacetate. This is Homogentisate 1,2-dioxygenase from Pseudomonas fluorescens (strain ATCC BAA-477 / NRRL B-23932 / Pf-5).